The chain runs to 294 residues: 4-hydroxy-tetrahydrodipicolinate synthase (294 aa).

Residue Thr-45 participates in pyruvate binding. Catalysis depends on Tyr-133, which acts as the Proton donor/acceptor. The active-site Schiff-base intermediate with substrate is the Lys-162. Residue Ile-204 participates in pyruvate binding.

Belongs to the DapA family. As to quaternary structure, homotetramer; dimer of dimers.

The protein resides in the cytoplasm. The enzyme catalyses L-aspartate 4-semialdehyde + pyruvate = (2S,4S)-4-hydroxy-2,3,4,5-tetrahydrodipicolinate + H2O + H(+). Its pathway is amino-acid biosynthesis; L-lysine biosynthesis via DAP pathway; (S)-tetrahydrodipicolinate from L-aspartate: step 3/4. In terms of biological role, catalyzes the condensation of (S)-aspartate-beta-semialdehyde [(S)-ASA] and pyruvate to 4-hydroxy-tetrahydrodipicolinate (HTPA). This chain is 4-hydroxy-tetrahydrodipicolinate synthase, found in Bartonella tribocorum (strain CIP 105476 / IBS 506).